Here is a 776-residue protein sequence, read N- to C-terminus: A-type ATP synthase subunit A (776 aa).

The protein belongs to the ATPase alpha/beta chains family. As to quaternary structure, has multiple subunits with at least A(3), B(3), C, D, E, F, H, I and proteolipid K(x). Post-translationally, this protein undergoes a protein self splicing that involves a post-translational excision of the VDE intervening region (intein) followed by peptide ligation.

It localises to the cell membrane. It catalyses the reaction ATP + H2O + 4 H(+)(in) = ADP + phosphate + 5 H(+)(out). Component of the A-type ATP synthase that produces ATP from ADP in the presence of a proton gradient across the membrane. The A chain is the catalytic subunit. The sequence is that of A-type ATP synthase subunit A from Thermoplasma volcanium (strain ATCC 51530 / DSM 4299 / JCM 9571 / NBRC 15438 / GSS1).